The following is a 364-amino-acid chain: Ribosomal RNA large subunit methyltransferase M (364 aa).

Residues S198, A231–G234, D250, D270, and D286 contribute to the S-adenosyl-L-methionine site. K315 acts as the Proton acceptor in catalysis.

The protein belongs to the class I-like SAM-binding methyltransferase superfamily. RNA methyltransferase RlmE family. RlmM subfamily. As to quaternary structure, monomer.

The protein resides in the cytoplasm. It catalyses the reaction cytidine(2498) in 23S rRNA + S-adenosyl-L-methionine = 2'-O-methylcytidine(2498) in 23S rRNA + S-adenosyl-L-homocysteine + H(+). Catalyzes the 2'-O-methylation at nucleotide C2498 in 23S rRNA. The chain is Ribosomal RNA large subunit methyltransferase M from Thauera aminoaromatica.